The sequence spans 171 residues: UPF0763 protein KHP_0657 (171 aa).

The protein belongs to the UPF0763 family.

The chain is UPF0763 protein KHP_0657 from Helicobacter pylori (strain 51).